We begin with the raw amino-acid sequence, 234 residues long: Uridylate kinase (234 aa).

9 to 10 (GS) serves as a coordination point for ATP. G43 is a binding site for UMP. Residues G44 and R48 each coordinate ATP. Residues D65 and 113 to 119 (VIPGQTT) contribute to the UMP site. Residues T139, Y145, and D148 each contribute to the ATP site.

The protein belongs to the UMP kinase family. As to quaternary structure, homohexamer.

The protein resides in the cytoplasm. The catalysed reaction is UMP + ATP = UDP + ADP. It participates in pyrimidine metabolism; CTP biosynthesis via de novo pathway; UDP from UMP (UMPK route): step 1/1. Inhibited by UTP. Its function is as follows. Catalyzes the reversible phosphorylation of UMP to UDP. In Methanococcoides burtonii (strain DSM 6242 / NBRC 107633 / OCM 468 / ACE-M), this protein is Uridylate kinase.